The chain runs to 61 residues: Large ribosomal subunit protein uL30 (61 aa).

Belongs to the universal ribosomal protein uL30 family. As to quaternary structure, part of the 50S ribosomal subunit.

The sequence is that of Large ribosomal subunit protein uL30 from Nitrosomonas europaea (strain ATCC 19718 / CIP 103999 / KCTC 2705 / NBRC 14298).